The following is a 676-amino-acid chain: Probable LRR receptor-like serine/threonine-protein kinase At4g31250 (676 aa).

Residues 1 to 26 form the signal peptide; the sequence is MTRDDKFPIVYSLLLIVLLFVSPIYG. At 27 to 242 the chain is on the extracellular side; sequence DGDADALLKF…LLPCRYTRPP (216 aa). N-linked (GlcNAc...) asparagine glycans are attached at residues N42, N73, and N83. LRR repeat units lie at residues 98-122, 123-146, 148-171, 172-195, and 197-218; these read IRGLKSISFMRNHFEGKIPRGIDGL, VSLAHLYLAHNQFTGEIDGDLFSG, KALLKVHLEGNRFSGEIPESLGKL, PKLTELNLEDNMFTGKIPAFKQKN, and VTVNVANNQLEGRIPLTLGLMN. The N-linked (GlcNAc...) asparagine glycan is linked to N218. The chain crosses the membrane as a helical span at residues 243–263; it reads FFTVFLLALTILAVVVLITVF. Topologically, residues 264–676 are cytoplasmic; that stretch reads LSVCILSRRQ…RAMTEEFSLM (413 aa). Over residues 319–330 the composition is skewed to polar residues; sequence TVQRDSTATSGA. A disordered region spans residues 319–347; it reads TVQRDSTATSGAISVGGLSPDEDKRGDQR. The Protein kinase domain maps to 366 to 640; that stretch reads RASAEVLGSG…HEAVDRIEEV (275 aa). S368 carries the post-translational modification Phosphoserine. ATP contacts are provided by residues 372-380 and K394; that span reads LGSGGFGSS. Residues S446 and S543 each carry the phosphoserine modification. A disordered region spans residues 641–676; that stretch reads DRDAGGGQESVRSSYVTASDGDHRSSRAMTEEFSLM.

The protein belongs to the protein kinase superfamily. Ser/Thr protein kinase family.

The protein resides in the membrane. The catalysed reaction is L-seryl-[protein] + ATP = O-phospho-L-seryl-[protein] + ADP + H(+). It carries out the reaction L-threonyl-[protein] + ATP = O-phospho-L-threonyl-[protein] + ADP + H(+). This Arabidopsis thaliana (Mouse-ear cress) protein is Probable LRR receptor-like serine/threonine-protein kinase At4g31250.